Reading from the N-terminus, the 332-residue chain is Biotin synthase (332 aa).

In terms of domain architecture, Radical SAM core spans 53 to 283 (WGKGGVHACS…VHPRKTIKFA (231 aa)). [4Fe-4S] cluster contacts are provided by C71, C75, and C78. 3 residues coordinate [2Fe-2S] cluster: C150, C211, and K281.

The protein belongs to the radical SAM superfamily. Biotin synthase family. Homodimer. The cofactor is [4Fe-4S] cluster. [2Fe-2S] cluster serves as cofactor.

The catalysed reaction is (4R,5S)-dethiobiotin + (sulfur carrier)-SH + 2 reduced [2Fe-2S]-[ferredoxin] + 2 S-adenosyl-L-methionine = (sulfur carrier)-H + biotin + 2 5'-deoxyadenosine + 2 L-methionine + 2 oxidized [2Fe-2S]-[ferredoxin]. It participates in cofactor biosynthesis; biotin biosynthesis; biotin from 7,8-diaminononanoate: step 2/2. Functionally, catalyzes the conversion of dethiobiotin (DTB) to biotin by the insertion of a sulfur atom into dethiobiotin via a radical-based mechanism. This is Biotin synthase from Chlorobium luteolum (strain DSM 273 / BCRC 81028 / 2530) (Pelodictyon luteolum).